Reading from the N-terminus, the 54-residue chain is Ovomucoid (54 aa).

The region spanning 4 to 54 (VDCSDYPKPVCPLDYMPLCGSDSKTYSNKCNFCNAVVESSGTLTLRHFGKC) is the Kazal-like domain. 3 disulfides stabilise this stretch: Cys-6/Cys-36, Cys-14/Cys-33, and Cys-22/Cys-54.

Post-translationally, this is the only ovomucoid third domain known to be not glycosylated.

It is found in the secreted. The protein is Ovomucoid of Struthio camelus (Common ostrich).